A 464-amino-acid chain; its full sequence is Glycosyl hydrolase family 109 protein 1 (464 aa).

A signal peptide spans 1-16 (MFKHLNALFIGLALFA). The N-palmitoyl cysteine moiety is linked to residue cysteine 17. A lipid anchor (S-diacylglycerol cysteine) is attached at cysteine 17. Residues 63–64 (MR), aspartate 85, 134–137 (WKHH), 154–155 (EV), and asparagine 183 contribute to the NAD(+) site. Substrate-binding positions include tyrosine 212, arginine 228, 240 to 243 (YATH), and tyrosine 318. Tyrosine 240 contacts NAD(+).

Belongs to the Gfo/Idh/MocA family. Glycosyl hydrolase 109 subfamily. NAD(+) serves as cofactor.

It is found in the cell membrane. Glycosidase. Has no alpha-N-acetylgalactosaminidase activity. The protein is Glycosyl hydrolase family 109 protein 1 of Bacteroides fragilis (strain ATCC 25285 / DSM 2151 / CCUG 4856 / JCM 11019 / LMG 10263 / NCTC 9343 / Onslow / VPI 2553 / EN-2).